A 130-amino-acid chain; its full sequence is Small ribosomal subunit protein bS16 (130 aa).

Basic and acidic residues predominate over residues 98–109 (AAAKQAAKDAAE). The disordered stretch occupies residues 98–130 (AAAKQAAKDAAEAKAAAAAEAEAPAADAEASEG). Over residues 110–130 (AKAAAAAEAEAPAADAEASEG) the composition is skewed to low complexity.

The protein belongs to the bacterial ribosomal protein bS16 family.

This chain is Small ribosomal subunit protein bS16, found in Synechococcus sp. (strain CC9902).